The chain runs to 261 residues: Histone H1-I (261 aa).

The segment covering 1-22 (MSETEAAPVVAPAAEAAPAAEA) has biased composition (low complexity). Disordered regions lie at residues 1-63 (MSET…PPYI) and 125-261 (FKLS…KGKK). The segment covering 41 to 50 (APKEPKAPKE) has biased composition (basic and acidic residues). Positions 58 to 129 (THPPYIEMVK…KVKGSFKLSE (72 aa)) constitute an H15 domain. The segment covering 133–142 (AKAKKSTPKK) has biased composition (basic residues). Tandem repeats lie at residues 136-140 (KKSTP) and 188-192 (KKATP). The 7 X 5 AA repeats of K-K-[AS]-T-P stretch occupies residues 136 to 250 (KKSTPKKAKA…KKAPAKKSTP (115 aa)). The DNA-binding element occupies 139–142 (TPKK). Basic and acidic residues predominate over residues 143–198 (AKADGEAKPKKSEAKPKKAEAVKKTKAPKEKVERPKKEKKEKVEKKKATPKAEKPK). A 3; approximate repeat occupies 199–203 (KAATP). A run of 4 repeats spans residues 209–213 (KKATP), 230–234 (KKATP), 236–240 (KKAAP), and 246–250 (KKSTP). Positions 227–250 (AKPKKATPSKKAAPKKAPAKKSTP) are enriched in basic residues. The segment covering 251–261 (KAKEAKSKGKK) has biased composition (basic and acidic residues).

This sequence belongs to the histone H1/H5 family.

Its subcellular location is the nucleus. The protein localises to the chromosome. Functionally, histones H1 are necessary for the condensation of nucleosome chains into higher-order structures. The polypeptide is Histone H1-I (H1-I) (Volvox carteri (Green alga)).